We begin with the raw amino-acid sequence, 359 residues long: Aspartate carbamoyltransferase catalytic subunit (359 aa).

2 residues coordinate carbamoyl phosphate: Arg52 and Thr53. Lys81 is an L-aspartate binding site. Carbamoyl phosphate is bound by residues Arg102, His130, and Gln133. L-aspartate contacts are provided by Arg163 and Arg224. Carbamoyl phosphate-binding residues include Leu264 and Pro265.

This sequence belongs to the aspartate/ornithine carbamoyltransferase superfamily. ATCase family. Heterododecamer (2C3:3R2) of six catalytic PyrB chains organized as two trimers (C3), and six regulatory PyrI chains organized as three dimers (R2).

The enzyme catalyses carbamoyl phosphate + L-aspartate = N-carbamoyl-L-aspartate + phosphate + H(+). It participates in pyrimidine metabolism; UMP biosynthesis via de novo pathway; (S)-dihydroorotate from bicarbonate: step 2/3. Functionally, catalyzes the condensation of carbamoyl phosphate and aspartate to form carbamoyl aspartate and inorganic phosphate, the committed step in the de novo pyrimidine nucleotide biosynthesis pathway. This is Aspartate carbamoyltransferase catalytic subunit from Brachyspira hyodysenteriae (strain ATCC 49526 / WA1).